The sequence spans 1202 residues: CHD3-type chromatin-remodeling factor CHR7 (1202 aa).

2 consecutive Chromo domains span residues 45-109 (GEIE…HPHL) and 142-201 (KTVD…RDKY). In terms of domain architecture, Helicase ATP-binding spans 237-405 (RYSWSKKTNV…FALMHFLDAD (169 aa)). 250 to 257 (DEMGLGKT) contributes to the ATP binding site. A DEAH box motif is present at residues 356 to 359 (DEGH). Positions 528–679 (LLDKMMVKLK…HLVVGKQHLC (152 aa)) constitute a Helicase C-terminal domain. Residues 838–872 (TSDEEEEADEPEAARQRKPRTVTRPYRKRARDNSE) form a disordered region. The segment covering 853–867 (QRKPRTVTRPYRKRA) has biased composition (basic residues).

The protein belongs to the SNF2/RAD54 helicase family.

Its subcellular location is the nucleus. Chromatin remodeling factor that represses the expression of embryonic trait genes upon and after seed germination and thus enables the developmental switch to post-germinative growth. The chain is CHD3-type chromatin-remodeling factor CHR7 from Arabidopsis thaliana (Mouse-ear cress).